The primary structure comprises 346 residues: Biotin synthase (346 aa).

In terms of domain architecture, Radical SAM core spans 38 to 256 (RQVQVSTLLS…IAVARIMMPT (219 aa)). [4Fe-4S] cluster-binding residues include Cys-53, Cys-57, and Cys-60. Residues Cys-97, Cys-128, Cys-188, and Arg-260 each contribute to the [2Fe-2S] cluster site.

Belongs to the radical SAM superfamily. Biotin synthase family. In terms of assembly, homodimer. [4Fe-4S] cluster serves as cofactor. [2Fe-2S] cluster is required as a cofactor.

The enzyme catalyses (4R,5S)-dethiobiotin + (sulfur carrier)-SH + 2 reduced [2Fe-2S]-[ferredoxin] + 2 S-adenosyl-L-methionine = (sulfur carrier)-H + biotin + 2 5'-deoxyadenosine + 2 L-methionine + 2 oxidized [2Fe-2S]-[ferredoxin]. Its pathway is cofactor biosynthesis; biotin biosynthesis; biotin from 7,8-diaminononanoate: step 2/2. Catalyzes the conversion of dethiobiotin (DTB) to biotin by the insertion of a sulfur atom into dethiobiotin via a radical-based mechanism. This is Biotin synthase from Escherichia coli O157:H7.